Here is a 406-residue protein sequence, read N- to C-terminus: Cysteine desulfurase (406 aa).

N6-(pyridoxal phosphate)lysine is present on K226. C364 acts as the Cysteine persulfide intermediate in catalysis.

This sequence belongs to the class-V pyridoxal-phosphate-dependent aminotransferase family. Csd subfamily. Homodimer. Interacts with SufE and the SufBCD complex composed of SufB, SufC and SufD. The interaction with SufE is required to mediate the direct transfer of the sulfur atom from the S-sulfanylcysteine. Requires pyridoxal 5'-phosphate as cofactor.

It is found in the cytoplasm. It catalyses the reaction (sulfur carrier)-H + L-cysteine = (sulfur carrier)-SH + L-alanine. The enzyme catalyses L-selenocysteine + AH2 = hydrogenselenide + L-alanine + A + H(+). Its pathway is cofactor biosynthesis; iron-sulfur cluster biosynthesis. Functionally, cysteine desulfurases mobilize the sulfur from L-cysteine to yield L-alanine, an essential step in sulfur metabolism for biosynthesis of a variety of sulfur-containing biomolecules. Component of the suf operon, which is activated and required under specific conditions such as oxidative stress and iron limitation. Acts as a potent selenocysteine lyase in vitro, that mobilizes selenium from L-selenocysteine. Selenocysteine lyase activity is however unsure in vivo. This is Cysteine desulfurase from Salmonella dublin (strain CT_02021853).